The sequence spans 246 residues: 1-(5-phosphoribosyl)-5-[(5-phosphoribosylamino)methylideneamino] imidazole-4-carboxamide isomerase (246 aa).

D7 functions as the Proton acceptor in the catalytic mechanism. D130 functions as the Proton donor in the catalytic mechanism.

It belongs to the HisA/HisF family.

Its subcellular location is the cytoplasm. The enzyme catalyses 1-(5-phospho-beta-D-ribosyl)-5-[(5-phospho-beta-D-ribosylamino)methylideneamino]imidazole-4-carboxamide = 5-[(5-phospho-1-deoxy-D-ribulos-1-ylimino)methylamino]-1-(5-phospho-beta-D-ribosyl)imidazole-4-carboxamide. Its pathway is amino-acid biosynthesis; L-histidine biosynthesis; L-histidine from 5-phospho-alpha-D-ribose 1-diphosphate: step 4/9. The sequence is that of 1-(5-phosphoribosyl)-5-[(5-phosphoribosylamino)methylideneamino] imidazole-4-carboxamide isomerase from Blochmanniella pennsylvanica (strain BPEN).